The primary structure comprises 119 residues: Large ribosomal subunit protein bL20 (119 aa).

Belongs to the bacterial ribosomal protein bL20 family.

Its function is as follows. Binds directly to 23S ribosomal RNA and is necessary for the in vitro assembly process of the 50S ribosomal subunit. It is not involved in the protein synthesizing functions of that subunit. In Geobacillus stearothermophilus (Bacillus stearothermophilus), this protein is Large ribosomal subunit protein bL20 (rplT).